The primary structure comprises 61 residues: Large ribosomal subunit protein bL28 (61 aa).

Residues 1–26 (MAKDFINGKRTQFGNKRSHALNSSRR) form a disordered region. Polar residues predominate over residues 9–25 (KRTQFGNKRSHALNSSR).

The protein belongs to the bacterial ribosomal protein bL28 family.

The sequence is that of Large ribosomal subunit protein bL28 from Limosilactobacillus reuteri (strain DSM 20016) (Lactobacillus reuteri).